The chain runs to 250 residues: Triosephosphate isomerase (250 aa).

Asn-9–Lys-11 contributes to the substrate binding site. The Electrophile role is filled by His-96. Glu-166 serves as the catalytic Proton acceptor. Substrate contacts are provided by residues Gly-172, Ser-212, and Gly-233–Gly-234.

Belongs to the triosephosphate isomerase family. Homodimer.

It localises to the cytoplasm. It catalyses the reaction D-glyceraldehyde 3-phosphate = dihydroxyacetone phosphate. The protein operates within carbohydrate biosynthesis; gluconeogenesis. Its pathway is carbohydrate degradation; glycolysis; D-glyceraldehyde 3-phosphate from glycerone phosphate: step 1/1. Involved in the gluconeogenesis. Catalyzes stereospecifically the conversion of dihydroxyacetone phosphate (DHAP) to D-glyceraldehyde-3-phosphate (G3P). The sequence is that of Triosephosphate isomerase from Chlorobium phaeovibrioides (strain DSM 265 / 1930) (Prosthecochloris vibrioformis (strain DSM 265)).